The following is a 212-amino-acid chain: Methylthioribulose-1-phosphate dehydratase (212 aa).

Residues His97 and His99 each coordinate Zn(2+).

The protein belongs to the aldolase class II family. MtnB subfamily. As to quaternary structure, homotetramer. It depends on Zn(2+) as a cofactor.

The catalysed reaction is 5-(methylsulfanyl)-D-ribulose 1-phosphate = 5-methylsulfanyl-2,3-dioxopentyl phosphate + H2O. It participates in amino-acid biosynthesis; L-methionine biosynthesis via salvage pathway; L-methionine from S-methyl-5-thio-alpha-D-ribose 1-phosphate: step 2/6. In terms of biological role, catalyzes the dehydration of methylthioribulose-1-phosphate (MTRu-1-P) into 2,3-diketo-5-methylthiopentyl-1-phosphate (DK-MTP-1-P). The polypeptide is Methylthioribulose-1-phosphate dehydratase (Bacillus mycoides (strain KBAB4) (Bacillus weihenstephanensis)).